A 928-amino-acid chain; its full sequence is DNA-binding protein RFX6 (928 aa).

Disordered stretches follow at residues 1 to 20 (MAKVPELEDTFLQAQPAPQL) and 50 to 98 (EGQP…SKTK). The segment at residues 124-199 (TLQWLEENYI…YHYYGIGIKE (76 aa)) is a DNA-binding region (RFX-type winged-helix).

The protein belongs to the RFX family. As to quaternary structure, interacts with RFX3. As to expression, expressed in pancreas. Expressed in pancreatic beta-cells (insulin-positive cells) and alpha-cells (glucagon-positive cells) (at protein level). Specifically expressed in pancreas, small intestine and colon. Expressed in endocrine cells in the islets.

The protein localises to the nucleus. Functionally, transcription factor required to direct islet cell differentiation during endocrine pancreas development. Specifically required for the differentiation of 4 of the 5 islet cell types and for the production of insulin. Not required for pancreatic PP (polypeptide-producing) cells differentiation. Acts downstream of NEUROG3 and regulates the transcription factors involved in beta-cell maturation and function, thereby restricting the expression of the beta-cell differentiation and specification genes, and thus the beta-cell fate choice. Activates transcription by forming a heterodimer with RFX3 and binding to the X-box in the promoter of target genes. Involved in glucose-stimulated insulin secretion by promoting insulin and L-type calcium channel gene transcription. The polypeptide is DNA-binding protein RFX6 (RFX6) (Homo sapiens (Human)).